We begin with the raw amino-acid sequence, 614 residues long: Vitamin B12 transporter BtuB (614 aa).

Residues 1 to 20 form the signal peptide; sequence MIKKASLLTACSVTAFSAWA. The short motif at 26–33 is the TonB box element; it reads DTLVVTAN. One can recognise a TBDR plug domain in the interval 38–152; that stretch reads PRSTVLAPTT…IGGVVNIITT (115 aa). Cyanocob(III)alamin contacts are provided by residues leucine 83, serine 85, asparagine 92, and 110 to 111; that span reads GS. Residues 155–614 enclose the TBDR beta-barrel domain; that stretch reads EPGTEISAGW…EYTLSGSYTF (460 aa). Beta stranded transmembrane passes span 158–165, 169–178, and 184–195; these read TEISAGWG, YQNYDVSTQQ, and TRVTLLGDYAHT. 4 residues coordinate Ca(2+): aspartate 199, glutamine 211, aspartate 213, and aspartate 215. Transmembrane regions (beta stranded) follow at residues 217–227 and 232–248; these read FLSKTLYGALE and DAWS…NRTN. Residues tyrosine 249 and aspartate 250 each coordinate Ca(2+). Alanine 251 is a binding site for cyanocob(III)alamin. Aspartate 261 contributes to the Ca(2+) binding site. 14 beta stranded membrane-spanning segments follow: residues 263–277, 279–296, 309–325, 328–337, 353–369, 371–381, 385–400, 403–417, 434–443, 449–458, 473–490, 494–509, 517–529, and 535–550; these read RKLY…LRYN, ELIK…KDYN, TLDE…NNII, HGNVGAGVDW, YDQR…QQVG, FTFEGAARSDD, FGRH…WEFI, YRFI…KAPN, KSKQWEGAFE, VNWRISGYRN, YYNE…TANF, PLTH…ARNA, RRAK…QLDW, and DWGI…YDKD. Threonine 309 is a cyanocob(III)alamin binding site. Arginine 517 serves as a coordination point for cyanocob(III)alamin. A cyanocob(III)alamin-binding site is contributed by tyrosine 551. Transmembrane regions (beta stranded) follow at residues 558-572, 585-596, and 602-614; these read TVKM…LAVA, IANLFDKDYETV, and AGRE…SYTF. Positions 597–614 match the TonB C-terminal box motif; sequence YGYQTAGREYTLSGSYTF.

It belongs to the TonB-dependent receptor family. BtuB (TC 1.B.14.3.1) subfamily.

The protein resides in the cell outer membrane. Functionally, involved in the active translocation of vitamin B12 (cyanocobalamin) across the outer membrane to the periplasmic space. It derives its energy for transport by interacting with the trans-periplasmic membrane protein TonB. The chain is Vitamin B12 transporter BtuB from Escherichia coli O157:H7.